Here is a 314-residue protein sequence, read N- to C-terminus: UDP-N-acetylenolpyruvoylglucosamine reductase (314 aa).

Residues 31–208 (RIGGPADYYA…LSARFRLTPK (178 aa)) form the FAD-binding PCMH-type domain. The active site involves Arg-187. Residue Ser-237 is the Proton donor of the active site. Residue Glu-307 is part of the active site.

The protein belongs to the MurB family. FAD is required as a cofactor.

It is found in the cytoplasm. It carries out the reaction UDP-N-acetyl-alpha-D-muramate + NADP(+) = UDP-N-acetyl-3-O-(1-carboxyvinyl)-alpha-D-glucosamine + NADPH + H(+). The protein operates within cell wall biogenesis; peptidoglycan biosynthesis. In terms of biological role, cell wall formation. This chain is UDP-N-acetylenolpyruvoylglucosamine reductase, found in Agathobacter rectalis (strain ATCC 33656 / DSM 3377 / JCM 17463 / KCTC 5835 / VPI 0990) (Eubacterium rectale).